A 142-amino-acid chain; its full sequence is uncharacterized protein (142 aa).

This is an uncharacterized protein from Caenorhabditis elegans.